Here is a 125-residue protein sequence, read N- to C-terminus: Larval cuticle protein LCP-14 (125 aa).

The first 16 residues, 1 to 16 (MKSFIVALCVVGCVLA), serve as a signal peptide directing secretion. The Chitin-binding type R&amp;R domain occupies 33 to 102 (EGSYNYAFES…PQADFLPTPP (70 aa)).

In terms of biological role, component of the cuticle of the larva of tobacco hornworm. In Manduca sexta (Tobacco hawkmoth), this protein is Larval cuticle protein LCP-14 (LCP-14).